We begin with the raw amino-acid sequence, 721 residues long: MVERILNSEDISLLISGRQSNPHKLLGIISENSSQDRIILFRPGAHSVAVELQGNIEHATHHHSGIFSLTTPKGTLLNDYRIYHQNGLLAHDPYAFSPLWGEIDSFLFHQGTHYKIYERMGAIPCDVRGISGVLFVVWAPHAQRVSVIGDFNFWNGLVNPLRKVSDSGVWELFIPGLDEGTLYKWEIVSASGEILIKTDPYGKGFDVPPLATSRVINSDRYVWHDAEWMEKRSCTQDQPLSIYEVHVGSWQWQDGRPIGYRGLAERLAQYCKEMSYTHIELLPITEHPLNESWGYQVTGYYAPTWRYGSPEDFQFFVDHLHSEGIGVILDWVPGHFPTDTFALAHFDGEALYESVDHKEPLHPHWHTYTFDYRCNEVVNFLLGSALFWLDKMHIDGLRVDAVTSMLYLDYGRKEGEWSPNIHGGKENLDAIEFLKHFNFIVHKEFPGVMTFAEESTDFPKVTEPINSGGLGFDYKWNLGWMHDTFRYLKVDPIFRAYHHNDLTFSIWYAFKENYLLPLSHDEVVHGKGSLLQKVPGDTWSKFAHMRLLLSYQICQPGKKLVFMGGEFAQGREWSPDRSLDWHLLDNPYHATLHKCVAKMNSLYRDLPYFWQGDGKQESFRWIDFKDTENNVISYYRLSGNDSNQALLCIHHFSSGYIPSYVLHCQGIKMCQLLFNSDDIGFGGSGKGNRPPILCIDHGFSWGIDIELPPLATLIFLVRFSN.

Residue Asp-400 is the Nucleophile of the active site. The Proton donor role is filled by Glu-453.

It belongs to the glycosyl hydrolase 13 family. GlgB subfamily. As to quaternary structure, monomer.

It catalyses the reaction Transfers a segment of a (1-&gt;4)-alpha-D-glucan chain to a primary hydroxy group in a similar glucan chain.. It participates in glycan biosynthesis; glycogen biosynthesis. Functionally, catalyzes the formation of the alpha-1,6-glucosidic linkages in glycogen by scission of a 1,4-alpha-linked oligosaccharide from growing alpha-1,4-glucan chains and the subsequent attachment of the oligosaccharide to the alpha-1,6 position. This is 1,4-alpha-glucan branching enzyme GlgB from Chlamydia felis (strain Fe/C-56) (Chlamydophila felis).